We begin with the raw amino-acid sequence, 154 residues long: MASASRDQQRDLIARGLEAEVNKRAAVSLFDRFGPSNPLFKKQYADTRLSLRSYHSCSQTERVRASLELVNLTIETKNKERALLSKLNRGAVARVEKLCDAVADLREEFDLELDSLTAAQDDPVEGGPEPADVADTITEWRAEALPSVPAEDAP.

The interval 116-137 is disordered; it reads LTAAQDDPVEGGPEPADVADTI.

The protein belongs to the herpesviridae UL96 family.

The polypeptide is Gene 35 protein (35) (Equus caballus (Horse)).